Consider the following 450-residue polypeptide: Plasmepsin VII (450 aa).

An N-terminal signal peptide occupies residues 1-24; sequence MNKNIIQIYLFVFILLLKQHIVIL. A Peptidase A1 domain is found at 92-441; that stretch reads YYGEVQIGEQ…DKDNLKIGFV (350 aa). Active-site residues include Asp-111 and Asp-324.

It belongs to the peptidase A1 family.

It localises to the cytoplasm. The chain is Plasmepsin VII from Plasmodium falciparum (isolate NF54).